The chain runs to 827 residues: Tuftelin-interacting protein 11 (827 aa).

Disordered stretches follow at residues phenylalanine 31 to valine 129 and glutamine 179 to valine 203. Over residues threonine 41–proline 60 the composition is skewed to basic and acidic residues. The segment covering aspartate 88–glutamate 98 has biased composition (acidic residues). Residues lysine 99–proline 112 are compositionally biased toward basic and acidic residues. In terms of domain architecture, G-patch spans threonine 145 to serine 191.

Belongs to the TFP11/STIP family. Identified in the spliceosome C complex.

The protein localises to the nucleus. Involved in pre-mRNA splicing, specifically in spliceosome disassembly during late-stage splicing events. The chain is Tuftelin-interacting protein 11 (TFIP11) from Gallus gallus (Chicken).